The following is a 556-amino-acid chain: Potassium-transporting ATPase potassium-binding subunit (556 aa).

The next 10 membrane-spanning stretches (helical) occupy residues Ala6–Gly26, Ser65–Gly85, Gly133–Val153, Leu176–Ile196, Pro249–Pro269, Val283–Leu303, Gly378–Gly398, Leu415–Met435, Ala483–Ala503, and Phe526–Leu546.

This sequence belongs to the KdpA family. The system is composed of three essential subunits: KdpA, KdpB and KdpC.

Its subcellular location is the cell membrane. Functionally, part of the high-affinity ATP-driven potassium transport (or Kdp) system, which catalyzes the hydrolysis of ATP coupled with the electrogenic transport of potassium into the cytoplasm. This subunit binds the extracellular potassium ions and delivers the ions to the membrane domain of KdpB through an intramembrane tunnel. This is Potassium-transporting ATPase potassium-binding subunit from Mycolicibacterium smegmatis (strain ATCC 700084 / mc(2)155) (Mycobacterium smegmatis).